Consider the following 460-residue polypeptide: Bifunctional protein GlmU (460 aa).

Residues 1-235 (MALSAAIVLA…PLTVEGVNDR (235 aa)) are pyrophosphorylase. UDP-N-acetyl-alpha-D-glucosamine contacts are provided by residues 9–12 (LAAG), Lys-23, Gln-76, and 81–82 (GT). Residue Asp-109 coordinates Mg(2+). UDP-N-acetyl-alpha-D-glucosamine-binding residues include Gly-146, Glu-161, Asn-176, and Asn-233. Asn-233 lines the Mg(2+) pocket. Residues 236 to 256 (VQLAALSKTYNRRVCERWMRN) form a linker region. The tract at residues 257–460 (GVTILDPETT…VEGWKPAWER (204 aa)) is N-acetyltransferase. 2 residues coordinate UDP-N-acetyl-alpha-D-glucosamine: Arg-338 and Lys-356. His-368 acts as the Proton acceptor in catalysis. The UDP-N-acetyl-alpha-D-glucosamine site is built by Tyr-371 and Asn-382. Acetyl-CoA contacts are provided by residues 391-392 (NY) and Ala-428.

In the N-terminal section; belongs to the N-acetylglucosamine-1-phosphate uridyltransferase family. It in the C-terminal section; belongs to the transferase hexapeptide repeat family. Homotrimer. Requires Mg(2+) as cofactor.

Its subcellular location is the cytoplasm. It catalyses the reaction alpha-D-glucosamine 1-phosphate + acetyl-CoA = N-acetyl-alpha-D-glucosamine 1-phosphate + CoA + H(+). It carries out the reaction N-acetyl-alpha-D-glucosamine 1-phosphate + UTP + H(+) = UDP-N-acetyl-alpha-D-glucosamine + diphosphate. Its pathway is nucleotide-sugar biosynthesis; UDP-N-acetyl-alpha-D-glucosamine biosynthesis; N-acetyl-alpha-D-glucosamine 1-phosphate from alpha-D-glucosamine 6-phosphate (route II): step 2/2. It functions in the pathway nucleotide-sugar biosynthesis; UDP-N-acetyl-alpha-D-glucosamine biosynthesis; UDP-N-acetyl-alpha-D-glucosamine from N-acetyl-alpha-D-glucosamine 1-phosphate: step 1/1. It participates in bacterial outer membrane biogenesis; LPS lipid A biosynthesis. In terms of biological role, catalyzes the last two sequential reactions in the de novo biosynthetic pathway for UDP-N-acetylglucosamine (UDP-GlcNAc). The C-terminal domain catalyzes the transfer of acetyl group from acetyl coenzyme A to glucosamine-1-phosphate (GlcN-1-P) to produce N-acetylglucosamine-1-phosphate (GlcNAc-1-P), which is converted into UDP-GlcNAc by the transfer of uridine 5-monophosphate (from uridine 5-triphosphate), a reaction catalyzed by the N-terminal domain. This chain is Bifunctional protein GlmU, found in Bifidobacterium longum subsp. infantis (strain ATCC 15697 / DSM 20088 / JCM 1222 / NCTC 11817 / S12).